The primary structure comprises 246 residues: Glucosamine-6-phosphate deaminase (246 aa).

Catalysis depends on Asp67, which acts as the Proton acceptor; for enolization step. The active-site For ring-opening step is the Asn136. His138 functions as the Proton acceptor; for ring-opening step in the catalytic mechanism. Glu143 functions as the For ring-opening step in the catalytic mechanism.

Belongs to the glucosamine/galactosamine-6-phosphate isomerase family. NagB subfamily.

The enzyme catalyses alpha-D-glucosamine 6-phosphate + H2O = beta-D-fructose 6-phosphate + NH4(+). The protein operates within amino-sugar metabolism; N-acetylneuraminate degradation; D-fructose 6-phosphate from N-acetylneuraminate: step 5/5. Functionally, catalyzes the reversible isomerization-deamination of glucosamine 6-phosphate (GlcN6P) to form fructose 6-phosphate (Fru6P) and ammonium ion. This is Glucosamine-6-phosphate deaminase from Halalkalibacterium halodurans (strain ATCC BAA-125 / DSM 18197 / FERM 7344 / JCM 9153 / C-125) (Bacillus halodurans).